The primary structure comprises 542 residues: Hydroxylamine reductase (542 aa).

[4Fe-4S] cluster is bound by residues C3, C6, C15, and C21. Hybrid [4Fe-2O-2S] cluster contacts are provided by H243, E267, C311, C398, C426, C451, E485, and K487. Residue C398 is modified to Cysteine persulfide.

Belongs to the HCP family. [4Fe-4S] cluster serves as cofactor. Requires hybrid [4Fe-2O-2S] cluster as cofactor.

The protein resides in the cytoplasm. The enzyme catalyses A + NH4(+) + H2O = hydroxylamine + AH2 + H(+). In terms of biological role, catalyzes the reduction of hydroxylamine to form NH(3) and H(2)O. This chain is Hydroxylamine reductase, found in Syntrophobacter fumaroxidans (strain DSM 10017 / MPOB).